The following is a 318-amino-acid chain: Methionyl-tRNA formyltransferase (318 aa).

Residue 112–115 (SILP) coordinates (6S)-5,6,7,8-tetrahydrofolate.

This sequence belongs to the Fmt family.

It catalyses the reaction L-methionyl-tRNA(fMet) + (6R)-10-formyltetrahydrofolate = N-formyl-L-methionyl-tRNA(fMet) + (6S)-5,6,7,8-tetrahydrofolate + H(+). Its function is as follows. Attaches a formyl group to the free amino group of methionyl-tRNA(fMet). The formyl group appears to play a dual role in the initiator identity of N-formylmethionyl-tRNA by promoting its recognition by IF2 and preventing the misappropriation of this tRNA by the elongation apparatus. This is Methionyl-tRNA formyltransferase from Shewanella sp. (strain W3-18-1).